Reading from the N-terminus, the 238-residue chain is Probable transcriptional regulatory protein ABC1956 (238 aa).

Belongs to the TACO1 family. YeeN subfamily.

The protein localises to the cytoplasm. This Shouchella clausii (strain KSM-K16) (Alkalihalobacillus clausii) protein is Probable transcriptional regulatory protein ABC1956.